The following is a 576-amino-acid chain: Putative diflavin flavoprotein A 1 (576 aa).

Residues 48–240 (RNGTTYNSFL…LAIKTVATGH (193 aa)) form a zinc metallo-hydrolase region. Positions 97, 99, 101, 164, 183, and 240 each coordinate Fe cation. The Flavodoxin-like domain occupies 269–431 (VALFYAEDYG…DLEKALGRIS (163 aa)). The segment at 432 to 576 (TGLYIITTKK…VHHRKVGNHY (145 aa)) is flavodoxin-reductase-like.

This sequence in the N-terminal section; belongs to the zinc metallo-hydrolase group 3 family. It in the C-terminal section; belongs to the flavodoxin reductase family. It depends on Fe cation as a cofactor.

Its function is as follows. Mediates electron transfer from NADH to oxygen, reducing it to water. This modular protein has 3 redox cofactors, in other organisms the same activity requires 2 or 3 proteins. This chain is Putative diflavin flavoprotein A 1 (dfa1), found in Nostoc sp. (strain PCC 7120 / SAG 25.82 / UTEX 2576).